We begin with the raw amino-acid sequence, 95 residues long: Bombyxin C-2 (95 aa).

Positions 1–19 are cleaved as a signal peptide; sequence MKLVILLVVVSAMLVLGGA. Glutamine 20 is modified (pyrrolidone carboxylic acid). Intrachain disulfides connect cysteine 27–cysteine 76, cysteine 39–cysteine 89, and cysteine 75–cysteine 80. The propeptide at 47 to 67 is c peptide like; sequence SGSQYAGYGWPWLPPFSSSRG.

The protein belongs to the insulin family. Heterodimer of a B chain and an A chain linked by two disulfide bonds.

The protein localises to the secreted. Functionally, brain peptide responsible for activation of prothoracic glands to produce ecdysone in insects. This Bombyx mori (Silk moth) protein is Bombyxin C-2 (BBXC2).